A 338-amino-acid chain; its full sequence is MSETRSAKPVRLRLACDACTTAKVRCSRTHPCERCEDNGQAKECCYSASRRHGKRARQRQSAQDSSSSSLTTQFTNAWDDYSTYSAGDLEMLDSWASRSVDVTVDFDDGNGISWVDPWKSLGFVSDTTASQSSGMVSPDLSLSTGPILSIKAPEPTAMHSHDCEALALKVLRSLQCNTNTDQSICKSSPIPQKQTFSTPSIDTVLSVNKAALTNLIPLLKCHCARNPHIAMLHSAILSKVIFWYRVAVTARYHADGVELRPMKIQLGMLDLDDEDQATLQRTVVLRELRKAEKVMETFDSFAGGDDGGLNWHVVAVRNMREELQGIIQKIKKCQGELM.

Positions 16–44 (CDACTTAKVRCSRTHPCERCEDNGQAKEC) form a DNA-binding region, zn(2)-C6 fungal-type.

Its subcellular location is the nucleus. Transcription factor that regulates the expression of the gene cluster that mediates the biosynthesis of fusarubins, highly pigmented naphthoquinones responsible for the coloration of the fruiting bodies. The sequence is that of Fusarubin cluster-specific transcription factor fsr6 from Gibberella fujikuroi (strain CBS 195.34 / IMI 58289 / NRRL A-6831) (Bakanae and foot rot disease fungus).